The sequence spans 201 residues: 3-isopropylmalate dehydratase small subunit (201 aa).

Belongs to the LeuD family. LeuD type 1 subfamily. In terms of assembly, heterodimer of LeuC and LeuD.

It catalyses the reaction (2R,3S)-3-isopropylmalate = (2S)-2-isopropylmalate. It functions in the pathway amino-acid biosynthesis; L-leucine biosynthesis; L-leucine from 3-methyl-2-oxobutanoate: step 2/4. In terms of biological role, catalyzes the isomerization between 2-isopropylmalate and 3-isopropylmalate, via the formation of 2-isopropylmaleate. The protein is 3-isopropylmalate dehydratase small subunit of Kineococcus radiotolerans (strain ATCC BAA-149 / DSM 14245 / SRS30216).